The following is a 356-amino-acid chain: Carminomycin 4-O-methyltransferase DnrK (356 aa).

Arg153 contributes to the S-adenosyl-L-methionine binding site. A substrate-binding site is contributed by Asp163. S-adenosyl-L-methionine-binding positions include Gly187, Glu210, 237 to 238, and Ser252; that span reads DF. Asn257 and Arg303 together coordinate substrate.

This sequence belongs to the class I-like SAM-binding methyltransferase superfamily. Cation-independent O-methyltransferase family. In terms of assembly, homodimer and homotetramer in equilibrium.

The catalysed reaction is carminomycin + S-adenosyl-L-methionine = daunorubicin + S-adenosyl-L-homocysteine + H(+). Its pathway is antibiotic biosynthesis; daunorubicin biosynthesis. It functions in the pathway antibiotic biosynthesis; carminomycin biosynthesis. In terms of biological role, involved in the biosynthesis of the anthracyclines carminomycin and daunorubicin (daunomycin) which are aromatic polyketide antibiotics that exhibit high cytotoxicity and are widely applied in the chemotherapy of a variety of cancers. In vivo, catalyzes the transfer of a methyl group from S-adenosyl-L-methionine to the 4-O-position of carminomycin to form daunorubicin. In vitro, it also methylates the anthracyclines rhodomycin D (10-carbomethoxy-13-deoxycarminomycin) and 13-deoxy-carminomycin at the 4-hydroxyl position. It is quite specific with respect to the length of the carbohydrate chain at the C7 position, but it can accept substrates with bulky substituent at C10 position. The sequence is that of Carminomycin 4-O-methyltransferase DnrK (dnrK) from Streptomyces peucetius.